A 64-amino-acid chain; its full sequence is Large ribosomal subunit protein bL32 (64 aa).

Positions 1–35 (MAVQKSRVTPSRRGQRRSHDALTAKQLSTDPTSGE) are disordered.

Belongs to the bacterial ribosomal protein bL32 family.

This Xanthomonas campestris pv. campestris (strain 8004) protein is Large ribosomal subunit protein bL32.